The primary structure comprises 181 residues: Probable nicotinate-nucleotide adenylyltransferase (181 aa).

The protein belongs to the NadD family.

The catalysed reaction is nicotinate beta-D-ribonucleotide + ATP + H(+) = deamido-NAD(+) + diphosphate. Its pathway is cofactor biosynthesis; NAD(+) biosynthesis; deamido-NAD(+) from nicotinate D-ribonucleotide: step 1/1. In terms of biological role, catalyzes the reversible adenylation of nicotinate mononucleotide (NaMN) to nicotinic acid adenine dinucleotide (NaAD). The protein is Probable nicotinate-nucleotide adenylyltransferase of Campylobacter fetus subsp. fetus (strain 82-40).